The chain runs to 212 residues: Agamous-like MADS-box protein MADS9 (212 aa).

The region spanning 1-61 (MGRGKIEIKR…GKMHEYCSPS (61 aa)) is the MADS-box domain. The region spanning 84–170 (HENLNNELDR…NYIVHHQGMP (87 aa)) is the K-box domain.

As to expression, expressed during flower development in stamens and petals.

The protein localises to the nucleus. In terms of biological role, probable transcription factor that may play role in specifying stamen and petal organ identity. The chain is Agamous-like MADS-box protein MADS9 from Vitis vinifera (Grape).